The following is a 180-amino-acid chain: ADP-ribosylation factor 5 (180 aa).

Glycine 2 carries the N-myristoyl glycine lipid modification. Residues glycine 24–threonine 31, aspartate 67–glutamine 71, and asparagine 126–aspartate 129 contribute to the GTP site.

This sequence belongs to the small GTPase superfamily. Arf family. In terms of assembly, interacts (when activated) with GGA1, GGA2 and GGA3; the interaction is required for proper subcellular location of GGA1, GGA2 and GGA3. Binds ASAP2. Interacts with NCS1/FREQ at the Golgi complex. Interacts with RAB11FIP3 and RAB11FIP4.

It is found in the golgi apparatus. The protein resides in the cytoplasm. Its subcellular location is the perinuclear region. It localises to the membrane. The protein localises to the trans-Golgi network membrane. GTP-binding protein involved in protein trafficking; may modulate vesicle budding and uncoating within the Golgi apparatus. Its function is as follows. (Microbial infection) Functions as an allosteric activator of the cholera toxin catalytic subunit, an ADP-ribosyltransferase. This chain is ADP-ribosylation factor 5 (ARF5), found in Homo sapiens (Human).